The sequence spans 530 residues: Bifunctional purine biosynthesis protein PurH (530 aa).

In terms of domain architecture, MGS-like spans 1 to 148 (MNNARPIHRA…KNHKDVAIVV (148 aa)).

Belongs to the PurH family.

The catalysed reaction is (6R)-10-formyltetrahydrofolate + 5-amino-1-(5-phospho-beta-D-ribosyl)imidazole-4-carboxamide = 5-formamido-1-(5-phospho-D-ribosyl)imidazole-4-carboxamide + (6S)-5,6,7,8-tetrahydrofolate. It catalyses the reaction IMP + H2O = 5-formamido-1-(5-phospho-D-ribosyl)imidazole-4-carboxamide. The protein operates within purine metabolism; IMP biosynthesis via de novo pathway; 5-formamido-1-(5-phospho-D-ribosyl)imidazole-4-carboxamide from 5-amino-1-(5-phospho-D-ribosyl)imidazole-4-carboxamide (10-formyl THF route): step 1/1. Its pathway is purine metabolism; IMP biosynthesis via de novo pathway; IMP from 5-formamido-1-(5-phospho-D-ribosyl)imidazole-4-carboxamide: step 1/1. The chain is Bifunctional purine biosynthesis protein PurH from Vibrio cholerae serotype O1 (strain ATCC 39541 / Classical Ogawa 395 / O395).